The primary structure comprises 254 residues: Small ribosomal subunit protein uS2 (254 aa).

Residues D228–E254 are disordered. Low complexity predominate over residues E240 to E254.

Belongs to the universal ribosomal protein uS2 family.

This chain is Small ribosomal subunit protein uS2, found in Flavobacterium johnsoniae (strain ATCC 17061 / DSM 2064 / JCM 8514 / BCRC 14874 / CCUG 350202 / NBRC 14942 / NCIMB 11054 / UW101) (Cytophaga johnsonae).